The following is a 666-amino-acid chain: DNA ligase (666 aa).

NAD(+)-binding positions include 31-35 (DYDFD), 80-81 (SL), and glutamate 111. Lysine 113 (N6-AMP-lysine intermediate) is an active-site residue. Residues arginine 134, glutamate 170, lysine 285, and lysine 309 each coordinate NAD(+). Zn(2+)-binding residues include cysteine 403, cysteine 406, cysteine 421, and cysteine 427. In terms of domain architecture, BRCT spans 587–666 (VVSNKLLGKI…ESDFSALLTS (80 aa)).

It belongs to the NAD-dependent DNA ligase family. LigA subfamily. The cofactor is Mg(2+). Mn(2+) is required as a cofactor.

It carries out the reaction NAD(+) + (deoxyribonucleotide)n-3'-hydroxyl + 5'-phospho-(deoxyribonucleotide)m = (deoxyribonucleotide)n+m + AMP + beta-nicotinamide D-nucleotide.. Its function is as follows. DNA ligase that catalyzes the formation of phosphodiester linkages between 5'-phosphoryl and 3'-hydroxyl groups in double-stranded DNA using NAD as a coenzyme and as the energy source for the reaction. It is essential for DNA replication and repair of damaged DNA. The polypeptide is DNA ligase (Flavobacterium psychrophilum (strain ATCC 49511 / DSM 21280 / CIP 103535 / JIP02/86)).